A 339-amino-acid polypeptide reads, in one-letter code: Ketol-acid reductoisomerase (NADP(+)) (339 aa).

One can recognise a KARI N-terminal Rossmann domain in the interval 1–182 (MRVYYDRDAD…GGGRAGVIET (182 aa)). Residues 24–27 (YGSQ), arginine 48, serine 51, threonine 53, and 83–86 (DELQ) contribute to the NADP(+) site. Histidine 108 is a catalytic residue. Residue glycine 134 participates in NADP(+) binding. A KARI C-terminal knotted domain is found at 183-328 (TFKEECETDL…KKLRSMMPWI (146 aa)). Mg(2+)-binding residues include aspartate 191, glutamate 195, glutamate 227, and glutamate 231. A substrate-binding site is contributed by serine 252.

The protein belongs to the ketol-acid reductoisomerase family. Mg(2+) is required as a cofactor.

It catalyses the reaction (2R)-2,3-dihydroxy-3-methylbutanoate + NADP(+) = (2S)-2-acetolactate + NADPH + H(+). It carries out the reaction (2R,3R)-2,3-dihydroxy-3-methylpentanoate + NADP(+) = (S)-2-ethyl-2-hydroxy-3-oxobutanoate + NADPH + H(+). Its pathway is amino-acid biosynthesis; L-isoleucine biosynthesis; L-isoleucine from 2-oxobutanoate: step 2/4. It participates in amino-acid biosynthesis; L-valine biosynthesis; L-valine from pyruvate: step 2/4. In terms of biological role, involved in the biosynthesis of branched-chain amino acids (BCAA). Catalyzes an alkyl-migration followed by a ketol-acid reduction of (S)-2-acetolactate (S2AL) to yield (R)-2,3-dihydroxy-isovalerate. In the isomerase reaction, S2AL is rearranged via a Mg-dependent methyl migration to produce 3-hydroxy-3-methyl-2-ketobutyrate (HMKB). In the reductase reaction, this 2-ketoacid undergoes a metal-dependent reduction by NADPH to yield (R)-2,3-dihydroxy-isovalerate. The chain is Ketol-acid reductoisomerase (NADP(+)) from Bartonella tribocorum (strain CIP 105476 / IBS 506).